A 430-amino-acid polypeptide reads, in one-letter code: Adenylosuccinate synthetase (430 aa).

Residues 12–18 (GDEGKGK) and 40–42 (GHT) each bind GTP. The active-site Proton acceptor is Asp-13. Mg(2+) contacts are provided by Asp-13 and Gly-40. IMP contacts are provided by residues 13-16 (DEGK), 38-41 (NAGH), Thr-130, Arg-144, Gln-224, Thr-239, and Arg-303. The active-site Proton donor is the His-41. Residue 299-305 (TVTGRKR) participates in substrate binding. GTP is bound by residues Arg-305, 331-333 (KLD), and 413-415 (STS).

The protein belongs to the adenylosuccinate synthetase family. As to quaternary structure, homodimer. Requires Mg(2+) as cofactor.

The protein resides in the cytoplasm. It catalyses the reaction IMP + L-aspartate + GTP = N(6)-(1,2-dicarboxyethyl)-AMP + GDP + phosphate + 2 H(+). It functions in the pathway purine metabolism; AMP biosynthesis via de novo pathway; AMP from IMP: step 1/2. Its function is as follows. Plays an important role in the de novo pathway of purine nucleotide biosynthesis. Catalyzes the first committed step in the biosynthesis of AMP from IMP. The sequence is that of Adenylosuccinate synthetase from Methylorubrum extorquens (strain CM4 / NCIMB 13688) (Methylobacterium extorquens).